The chain runs to 577 residues: Methionine--tRNA ligase (577 aa).

Residues 21–31 carry the 'HIGH' region motif; the sequence is PYANGPLHVGH. Zn(2+) contacts are provided by Cys153, Cys156, Cys166, and Cys169. A 'KMSKS' region motif is present at residues 355 to 359; it reads QMSTS. Thr358 lines the ATP pocket.

It belongs to the class-I aminoacyl-tRNA synthetase family. MetG type 1 subfamily. Monomer. The cofactor is Zn(2+).

Its subcellular location is the cytoplasm. The catalysed reaction is tRNA(Met) + L-methionine + ATP = L-methionyl-tRNA(Met) + AMP + diphosphate. Is required not only for elongation of protein synthesis but also for the initiation of all mRNA translation through initiator tRNA(fMet) aminoacylation. The protein is Methionine--tRNA ligase of Rubrobacter xylanophilus (strain DSM 9941 / JCM 11954 / NBRC 16129 / PRD-1).